A 94-amino-acid polypeptide reads, in one-letter code: Phosphoribosyl-ATP pyrophosphatase (94 aa).

This sequence belongs to the PRA-PH family.

Its subcellular location is the cytoplasm. The catalysed reaction is 1-(5-phospho-beta-D-ribosyl)-ATP + H2O = 1-(5-phospho-beta-D-ribosyl)-5'-AMP + diphosphate + H(+). The protein operates within amino-acid biosynthesis; L-histidine biosynthesis; L-histidine from 5-phospho-alpha-D-ribose 1-diphosphate: step 2/9. The sequence is that of Phosphoribosyl-ATP pyrophosphatase from Pyrobaculum neutrophilum (strain DSM 2338 / JCM 9278 / NBRC 100436 / V24Sta) (Thermoproteus neutrophilus).